Consider the following 132-residue polypeptide: uncharacterized protein (132 aa).

Disordered regions lie at residues 36–69 and 97–132; these read GLASTPSLRPRPRPWEGQLQHQSHQGSLDKPNIS and QINDSDNDNDDNNNDNNKGDGNDDDNNTVTANPTAR. Residue Ser-101 is modified to Phosphoserine.

As to quaternary structure, copurifies with proteins HOL1, MMP1, PEX7 and PLB1.

This is an uncharacterized protein from Saccharomyces cerevisiae (strain ATCC 204508 / S288c) (Baker's yeast).